The sequence spans 663 residues: MFRPEEMVKLEVITLNRYKDTLLTYLHEAGAVEVREVKVELAQKDTPNEYHRKAASYSISMSRLVEFLGTYRKAAGGGIKEFFFPKEKPKRTYRYERLEKLIKDVEEFLGKVEPEIKAIEGRMNSLSTEIERIKEQIGILDILTPLNIDVSYLRHCGVVEVTVGLVDRTRVKELADALKKETENHVAIITKEASDKALVVIVNLARDHDKVNTLLAKFSVEKLEIPEGEGTPKELMKEYSKKLAEKEKELEEAKKEASKLAEKYYDDVLFYKELVDNERDKSTVLPMLARTNMTFALTGWVPRPDVQKILEGIKRITEGKAYINVREPRKEELEEMPVKLKNPGWARPFEMLTEMYGVPRHDEIDPTPIIAFTYSFFFGFMLTDFLYGLIVGIVAALLVKGHKKFNDGTYKFAYILLWSAFFTMLLGALFGSYFGNAADIMLQYITGDQNAHAWRLLDPLREPMPMLLAALAIGLAHLFLGYTLGFVIKWKNGDRKGAVFEQLPWMIIIIGVALLASQREGLDAAAKAILGTGIALFAVGELVINGGLAALMIISDFFGFVGNWLSYARLMALALATGGIAMVINVLVGMVWAIKFLYIGPIIGLIIFFGGQLFSTAINALGAFVHALRLHYVEFFGTFYSGEGKRFEPFKSKREVSKLELEV.

7 helical membrane passes run 376–396 (FFFG…IVAA), 412–432 (FAYI…LFGS), 468–488 (LAAL…GFVI), 497–517 (GAVF…LLAS), 534–554 (IALF…LMII), 568–588 (ARLM…NVLV), and 589–609 (GMVW…IIFF).

This sequence belongs to the V-ATPase 116 kDa subunit family. As to quaternary structure, has multiple subunits with at least A(3), B(3), C, D, E, F, H, I and proteolipid K(x).

It is found in the cell membrane. Its function is as follows. Component of the A-type ATP synthase that produces ATP from ADP in the presence of a proton gradient across the membrane. The polypeptide is A-type ATP synthase subunit I (Thermococcus kodakarensis (strain ATCC BAA-918 / JCM 12380 / KOD1) (Pyrococcus kodakaraensis (strain KOD1))).